A 29-amino-acid polypeptide reads, in one-letter code: L-serine dehydratase, beta chain (29 aa).

This sequence belongs to the iron-sulfur dependent L-serine dehydratase family. Heterodimer of an alpha chain and a beta chain. Requires [4Fe-4S] cluster as cofactor.

It catalyses the reaction L-serine = pyruvate + NH4(+). Its pathway is carbohydrate biosynthesis; gluconeogenesis. This is L-serine dehydratase, beta chain from Anaerotignum propionicum (Clostridium propionicum).